We begin with the raw amino-acid sequence, 292 residues long: MLSAALAFNSYALDITHEMGTTSFETTPKKVVALDWVLTETVLSLGIELEGAANISGYQQWVAEPHLNADAIDVGSRREPNLELLSNIKPDVILISKHLAAAYEPLSKIAPVLVYSVYSEDKQPLESAKRITRSLGKLFDKEQQAEQVIAQTDQRLAANGAKITSAGKAEKPLLFARFINDKTLRIHSEGSLAQDTINAMGLKNDWQEPTNLWGFTTTGTEKLAEHQKANVMIFGPLSQEERQQLTQSPLWQAMEFSRTDSVYELPAIWTFGGLLAAQRLSDHITGRLTQPQ.

A signal peptide spans methionine 1–alanine 12. Positions lysine 30–glutamine 292 constitute a Fe/B12 periplasmic-binding domain. Tryptophan 61, arginine 77, tyrosine 118, arginine 185, tryptophan 213, phenylalanine 215, tryptophan 269, and phenylalanine 271 together coordinate desferrioxamine B.

This sequence belongs to the bacterial solute-binding protein 8 family. The complex is composed of two ATP-binding proteins (VatC), two transmembrane proteins (VatB) and a solute-binding protein (VatD).

The protein resides in the periplasm. Part of the ABC transporter complex VatCDB involved in the import of iron(3+)-complexed aerobactin, a citrate-hydroxamate siderophore produced by other bacteria. Binds the iron(3+)-aerobactin complex and transfers it to the membrane-bound permease. Functions in the import of iron(3+)-complexed vulnibactin, a catecholate siderophore synthesized by V.vulnificus, in the absence of FatB. This is Ferric aerobactin-binding protein VatD from Vibrio vulnificus.